Here is a 449-residue protein sequence, read N- to C-terminus: N-succinylarginine dihydrolase (449 aa).

Substrate-binding positions include 19–28, asparagine 110, and 137–138; these read GGLSYGNVAS and HR. The segment at 23 to 43 is disordered; it reads YGNVASQSNSQQGSNPREAAR. Polar residues predominate over residues 25–37; that stretch reads NVASQSNSQQGSN. Glutamate 174 is an active-site residue. Arginine 214 is a substrate binding site. The active site involves histidine 250. Positions 252 and 365 each coordinate substrate. Cysteine 371 serves as the catalytic Nucleophile.

It belongs to the succinylarginine dihydrolase family. As to quaternary structure, homodimer.

The catalysed reaction is N(2)-succinyl-L-arginine + 2 H2O + 2 H(+) = N(2)-succinyl-L-ornithine + 2 NH4(+) + CO2. It participates in amino-acid degradation; L-arginine degradation via AST pathway; L-glutamate and succinate from L-arginine: step 2/5. In terms of biological role, catalyzes the hydrolysis of N(2)-succinylarginine into N(2)-succinylornithine, ammonia and CO(2). This chain is N-succinylarginine dihydrolase, found in Pseudomonas entomophila (strain L48).